A 319-amino-acid polypeptide reads, in one-letter code: Acetyl esterase (319 aa).

The Involved in the stabilization of the negatively charged intermediate by the formation of the oxyanion hole motif lies at 91–93; sequence HGG. Active-site residues include serine 165, aspartate 262, and histidine 292.

The protein belongs to the 'GDXG' lipolytic enzyme family. Homodimer. Interacts with MalT and MelA.

It is found in the cytoplasm. In terms of biological role, displays esterase activity towards short chain fatty esters (acyl chain length of up to 8 carbons). Able to hydrolyze triacetylglycerol (triacetin) and tributyrylglycerol (tributyrin), but not trioleylglycerol (triolein) or cholesterol oleate. Negatively regulates MalT activity by antagonizing maltotriose binding. Inhibits MelA galactosidase activity. This Shigella flexneri protein is Acetyl esterase.